Here is a 411-residue protein sequence, read N- to C-terminus: Short chain dehydrogenase ausT (411 aa).

Positions 105, 137, 249, and 253 each coordinate NADP(+). Residue Tyr-249 is the Proton donor of the active site. Catalysis depends on Tyr-263, which acts as the Proton donor.

The protein belongs to the short-chain dehydrogenases/reductases (SDR) family.

It functions in the pathway secondary metabolite biosynthesis; terpenoid biosynthesis. In terms of biological role, short chain dehydrogenase; part of the gene cluster that mediates the biosynthesis of calidodehydroaustin, a fungal meroterpenoid. The first step of the pathway is the synthesis of 3,5-dimethylorsellinic acid by the polyketide synthase ausA. 3,5-dimethylorsellinic acid is then prenylated by the polyprenyl transferase ausN. Further epoxidation by the FAD-dependent monooxygenase ausM and cyclization by the probable terpene cyclase ausL lead to the formation of protoaustinoid A. Protoaustinoid A is then oxidized to spiro-lactone preaustinoid A3 by the combined action of the FAD-binding monooxygenases ausB and ausC, and the dioxygenase ausE. Acid-catalyzed keto-rearrangement and ring contraction of the tetraketide portion of preaustinoid A3 by ausJ lead to the formation of preaustinoid A4. The aldo-keto reductase ausK, with the help of ausH, is involved in the next step by transforming preaustinoid A4 into isoaustinone which is in turn hydroxylated by the P450 monooxygenase ausI to form austinolide. The cytochrome P450 monooxygenase ausG modifies austinolide to austinol. Austinol is further acetylated to austin by the O-acetyltransferase ausP, which spontaneously changes to dehydroaustin. The cytochrome P450 monooxygenase ausR then converts dehydroaustin is into 7-dehydrodehydroaustin. The hydroxylation catalyzed by ausR permits the O-acetyltransferase ausQ to add an additional acetyl group to the molecule, leading to the formation of acetoxydehydroaustin. The short chain dehydrogenase ausT catalyzes the reduction of the double bond present between carbon atoms 1 and 2 to convert 7-dehydrodehydroaustin into 1,2-dihydro-7-hydroxydehydroaustin. AusQ catalyzes not only an acetylation reaction but also the addition of the PKS ausV diketide product to 1,2-dihydro-7-hydroxydehydroaustin, forming precalidodehydroaustin. Finally, the iron/alpha-ketoglutarate-dependent dioxygenase converts precalidodehydroaustin into calidodehydroaustin. The polypeptide is Short chain dehydrogenase ausT (Aspergillus calidoustus).